Reading from the N-terminus, the 88-residue chain is Small ribosomal subunit protein bS20 (88 aa).

A disordered region spans residues 1–21; it reads MANTTSAKKATRKIARRTAVN.

Belongs to the bacterial ribosomal protein bS20 family.

Its function is as follows. Binds directly to 16S ribosomal RNA. This is Small ribosomal subunit protein bS20 from Agrobacterium fabrum (strain C58 / ATCC 33970) (Agrobacterium tumefaciens (strain C58)).